Here is a 239-residue protein sequence, read N- to C-terminus: MLNRISSSSPTSYVSSGSSSAGINPSINVRPPRGGPVDTLVGAASDNNLVYIGDEHGKLFIPKLITESAAKLKNAGVDHLAVEFVKHSDGAAFREALSDGKSAVKHFLEASWGRHGDAWLDKVSEALCSAHRAGIYVSGIDRKMAIDQPKTPMQKILYMKKRLALNVAWDAAATREASAVCANKSIVWGGAGHFSNSKTDGPKDMRPGLVISFDLTGRGSSRINDADEHSHIVIAGEDN.

Residues 1–20 (MLNRISSSSPTSYVSSGSSS) show a composition bias toward low complexity. The tract at residues 1 to 31 (MLNRISSSSPTSYVSSGSSSAGINPSINVRP) is disordered.

It localises to the secreted. Its subcellular location is the host cell. In terms of biological role, virulence factor recognized by the A.thaliana disease resistance protein RBA1, which triggers plant cell death. HopBA1 enhances RBA1 self-association, which is necessary for ectopic autoactivation of host cell death. This chain is Type III effector protein HopBA1, found in Pseudomonas syringae pv. aptata.